The sequence spans 350 residues: Holliday junction branch migration complex subunit RuvB (350 aa).

Residues 1–183 (MSAERLVNPH…FVAVHRLVFY (183 aa)) are large ATPase domain (RuvB-L). ATP is bound by residues L22, R23, G64, K67, T68, S69, 130–132 (EDF), R173, Y183, and R220. A Mg(2+)-binding site is contributed by T68. Positions 184-254 (SDDAMTEIVS…VARDALAQLE (71 aa)) are small ATPAse domain (RuvB-S). The segment at 257-350 (ELGLDENDRR…ESGPQQATLF (94 aa)) is head domain (RuvB-H). 2 residues coordinate DNA: R312 and R317. Residues 331 to 350 (YPERTLPADDESGPQQATLF) are disordered.

This sequence belongs to the RuvB family. Homohexamer. Forms an RuvA(8)-RuvB(12)-Holliday junction (HJ) complex. HJ DNA is sandwiched between 2 RuvA tetramers; dsDNA enters through RuvA and exits via RuvB. An RuvB hexamer assembles on each DNA strand where it exits the tetramer. Each RuvB hexamer is contacted by two RuvA subunits (via domain III) on 2 adjacent RuvB subunits; this complex drives branch migration. In the full resolvosome a probable DNA-RuvA(4)-RuvB(12)-RuvC(2) complex forms which resolves the HJ.

It is found in the cytoplasm. It carries out the reaction ATP + H2O = ADP + phosphate + H(+). Its function is as follows. The RuvA-RuvB-RuvC complex processes Holliday junction (HJ) DNA during genetic recombination and DNA repair, while the RuvA-RuvB complex plays an important role in the rescue of blocked DNA replication forks via replication fork reversal (RFR). RuvA specifically binds to HJ cruciform DNA, conferring on it an open structure. The RuvB hexamer acts as an ATP-dependent pump, pulling dsDNA into and through the RuvAB complex. RuvB forms 2 homohexamers on either side of HJ DNA bound by 1 or 2 RuvA tetramers; 4 subunits per hexamer contact DNA at a time. Coordinated motions by a converter formed by DNA-disengaged RuvB subunits stimulates ATP hydrolysis and nucleotide exchange. Immobilization of the converter enables RuvB to convert the ATP-contained energy into a lever motion, pulling 2 nucleotides of DNA out of the RuvA tetramer per ATP hydrolyzed, thus driving DNA branch migration. The RuvB motors rotate together with the DNA substrate, which together with the progressing nucleotide cycle form the mechanistic basis for DNA recombination by continuous HJ branch migration. Branch migration allows RuvC to scan DNA until it finds its consensus sequence, where it cleaves and resolves cruciform DNA. The protein is Holliday junction branch migration complex subunit RuvB of Chloroflexus aurantiacus (strain ATCC 29366 / DSM 635 / J-10-fl).